We begin with the raw amino-acid sequence, 833 residues long: Prickle-like protein 1 (833 aa).

Residues 1–22 (MPLEMDQKISKHTFGCQRSSTS) are disordered. In terms of domain architecture, PET spans 14–122 (FGCQRSSTSD…NIKMLSRAVM (109 aa)). LIM zinc-binding domains lie at 124–188 (AMCE…ELLK), 189–249 (PRCS…HYAE), and 250–313 (YCES…EDVH). 5 disordered regions span residues 312–346 (VHAS…ADQC), 432–456 (EDNR…RNSR), 603–702 (CQEK…ERNP), 767–786 (CSSS…QPIP), and 805–833 (NALS…CIIS). 2 stretches are compositionally biased toward basic and acidic residues: residues 432–453 (EDNR…DLQR) and 603–614 (CQEKPPPEEKPM). Over residues 669-680 (RPHHHRRRKSRK) the composition is skewed to basic residues. A compositionally biased stretch (basic residues) spans 817–833 (TKSKKKKGHKGKNCIIS). At Cys-830 the chain carries Cysteine methyl ester. The S-farnesyl cysteine moiety is linked to residue Cys-830. Residues 831–833 (IIS) constitute a propeptide, removed in mature form.

It belongs to the prickle / espinas / testin family. As to quaternary structure, interacts with dvl2/dsh and mapk8/jnk1.

It is found in the cell membrane. In terms of biological role, acts in a planar cell polarity (PCP) complex; polarization along the apical/basal axis of epithelial cells. Regulates the polarized assembly of fibronectrin on the surface of the mesoderm during gastrulation. Essential for gastrulation cell movements, cooperating with dvl2/dsh to activate jnk. Acts together with tes to control axial elongation. The sequence is that of Prickle-like protein 1 from Xenopus tropicalis (Western clawed frog).